A 71-amino-acid polypeptide reads, in one-letter code: Antitoxin VapB22 (71 aa).

It belongs to the phD/YefM antitoxin family.

Functionally, antitoxin component of a type II toxin-antitoxin (TA) system. Upon expression in M.smegmatis neutralizes the effect of cognate toxin VapC22. This chain is Antitoxin VapB22 (vapB22), found in Mycobacterium tuberculosis (strain ATCC 25618 / H37Rv).